Here is a 987-residue protein sequence, read N- to C-terminus: Mediator of RNA polymerase II transcription subunit 24 (987 aa).

6 short sequence motifs (LXXLL motif) span residues leucine 128–leucine 132, leucine 344–leucine 348, leucine 446–leucine 450, leucine 555–leucine 559, leucine 786–leucine 790, and leucine 855–leucine 859. Phosphoserine is present on residues serine 860 and serine 871.

Belongs to the Mediator complex subunit 24 family. Component of the Mediator complex, which is composed of MED1, MED4, MED6, MED7, MED8, MED9, MED10, MED11, MED12, MED13, MED13L, MED14, MED15, MED16, MED17, MED18, MED19, MED20, MED21, MED22, MED23, MED24, MED25, MED26, MED27, MED29, MED30, MED31, CCNC, CDK8 and CDC2L6/CDK11. The MED12, MED13, CCNC and CDK8 subunits form a distinct module termed the CDK8 module. Mediator containing the CDK8 module is less active than Mediator lacking this module in supporting transcriptional activation. Individual preparations of the Mediator complex lacking one or more distinct subunits have been variously termed ARC, CRSP, DRIP, PC2, SMCC and TRAP. Interacts with AR. Interacts with MED1 and MED10. Expressed in the adrenal gland, brain, epididymis, heart, kidney, liver, ovary, pancreas, prostate, skeletal muscle, small intestine, spleen, stomach, testis and thymus.

Its subcellular location is the nucleus. Its function is as follows. Component of the Mediator complex, a coactivator involved in the regulated transcription of nearly all RNA polymerase II-dependent genes. Mediator functions as a bridge to convey information from gene-specific regulatory proteins to the basal RNA polymerase II transcription machinery. Mediator is recruited to promoters by direct interactions with regulatory proteins and serves as a scaffold for the assembly of a functional preinitiation complex with RNA polymerase II and the general transcription factors. Required for basal and activator-dependent transcription. The polypeptide is Mediator of RNA polymerase II transcription subunit 24 (Med24) (Mus musculus (Mouse)).